A 650-amino-acid polypeptide reads, in one-letter code: Pentatricopeptide repeat-containing protein At1g51965, mitochondrial (650 aa).

A mitochondrion-targeting transit peptide spans Met1–Tyr23. PPR repeat units follow at residues Asp132–Gly169, Asn170–Lys200, Asn202–Leu236, Asp237–Arg267, Asp269–Leu303, Asn304–Pro338, Asn339–Tyr369, Thr371–Gly405, Glu406–Thr440, Asp441–Pro475, Asp476–Pro510, Asp511–Pro545, Asp546–Pro580, and Asn581–Pro615.

It belongs to the PPR family. P subfamily.

It localises to the mitochondrion. The sequence is that of Pentatricopeptide repeat-containing protein At1g51965, mitochondrial from Arabidopsis thaliana (Mouse-ear cress).